A 356-amino-acid chain; its full sequence is Peptide methionine sulfoxide reductase MsrA/MsrB (356 aa).

The tract at residues 46-199 is peptide methionine sulfoxide reductase A; sequence HEIYLAGGCF…PNGYCHIDLE (154 aa). Residue C54 is part of the active site. The region spanning 216–339 is the MsrB domain; that stretch reads DAELKAKLTP…NSAAVKFIPL (124 aa). Residue C328 is the Nucleophile of the active site.

This sequence in the N-terminal section; belongs to the MsrA Met sulfoxide reductase family. The protein in the C-terminal section; belongs to the MsrB Met sulfoxide reductase family.

The catalysed reaction is L-methionyl-[protein] + [thioredoxin]-disulfide + H2O = L-methionyl-(S)-S-oxide-[protein] + [thioredoxin]-dithiol. It catalyses the reaction [thioredoxin]-disulfide + L-methionine + H2O = L-methionine (S)-S-oxide + [thioredoxin]-dithiol. The enzyme catalyses L-methionyl-[protein] + [thioredoxin]-disulfide + H2O = L-methionyl-(R)-S-oxide-[protein] + [thioredoxin]-dithiol. Functionally, has an important function as a repair enzyme for proteins that have been inactivated by oxidation. Catalyzes the reversible oxidation-reduction of methionine sulfoxide in proteins to methionine. The chain is Peptide methionine sulfoxide reductase MsrA/MsrB (msrAB) from Aggregatibacter actinomycetemcomitans (Actinobacillus actinomycetemcomitans).